The sequence spans 646 residues: Preterminal protein (646 aa).

The Nuclear localization signal signature appears at 357-366; it reads RLPVRRRRRR. Serine 555 carries the post-translational modification O-(5'-phospho-DNA)-serine. Residues 619-646 are disordered; the sequence is LHADVPLPPLQANPHPPLPPDARPQRTM. A compositionally biased stretch (pro residues) spans 624–640; it reads PLPPLQANPHPPLPPDA.

It belongs to the adenoviridae terminal protein family. As to quaternary structure, heterodimer with the polymerase; this heterodimer binds to bp 9 to 18 of the genome. Interacts with host POU2F1; POU2F1 binds to the auxiliary sequences in the inverted terminal repeats and tethers the pTP-POL heterodimer to the origin DNA thereby participating in the assembly of the pre-initiation complex (POL-TP-DBP-NFIA-POU2F1). Post-translationally, preterminal protein is used to replicate viral genome, upon genomic encapsidation it is processed first into iTP and finally into TP by adenovirus protease.

The protein resides in the host nucleus matrix. Its function is as follows. Protein covalently bound to the viral DNA that acts as a primer for viral genomic replication by DNA strand displacement. Assembles on the viral origin of replication in an initiation complex with viral polymerase, DBP, host NFIA and host POU2F1/OCT1. During initiation, the polymerase covalently couples the first dCTP with Ser-580 of pTP. The terminal protein stimulates the template activity over 20 fold compared to protein-free templates. Neo-synthesized viral genomes are linked to two preterminal proteins, one for each 5' end. These new genomes are encapsidated in the nucleus, and during capsid maturation by viral protease, preterminal protein is first cleaved into intermediary (iTP), then into mature TP. May play a role in host nuclear matrix localization of genomic DNA. The protein is Preterminal protein of Homo sapiens (Human).